The following is a 188-amino-acid chain: Ribosomal RNA small subunit methyltransferase G (188 aa).

S-adenosyl-L-methionine contacts are provided by residues Gly69, Phe74, 119-120, and Arg134; that span reads VQ.

It belongs to the methyltransferase superfamily. RNA methyltransferase RsmG family.

The protein resides in the cytoplasm. The enzyme catalyses guanosine(527) in 16S rRNA + S-adenosyl-L-methionine = N(7)-methylguanosine(527) in 16S rRNA + S-adenosyl-L-homocysteine. Specifically methylates the N7 position of guanine in position 527 of 16S rRNA. This chain is Ribosomal RNA small subunit methyltransferase G, found in Campylobacter jejuni subsp. jejuni serotype O:2 (strain ATCC 700819 / NCTC 11168).